Here is a 224-residue protein sequence, read N- to C-terminus: Glycerol-3-phosphate acyltransferase (224 aa).

5 helical membrane-spanning segments follow: residues 14–34, 64–84, 98–118, 127–147, and 160–180; these read FFPLAATLLGYLIGSLSFAVI, TAAIVTLLLDAAKGWLPVMLV, MALVGLAAFIGHLYPVFFNFA, LGVLLGLSPILALATGATWLI, and LTAAVFVPVYYVFGDGMAWYL.

It belongs to the PlsY family. In terms of assembly, probably interacts with PlsX.

It localises to the cell inner membrane. It carries out the reaction an acyl phosphate + sn-glycerol 3-phosphate = a 1-acyl-sn-glycero-3-phosphate + phosphate. Its pathway is lipid metabolism; phospholipid metabolism. Functionally, catalyzes the transfer of an acyl group from acyl-phosphate (acyl-PO(4)) to glycerol-3-phosphate (G3P) to form lysophosphatidic acid (LPA). This enzyme utilizes acyl-phosphate as fatty acyl donor, but not acyl-CoA or acyl-ACP. This chain is Glycerol-3-phosphate acyltransferase, found in Albidiferax ferrireducens (strain ATCC BAA-621 / DSM 15236 / T118) (Rhodoferax ferrireducens).